Consider the following 968-residue polypeptide: Polycystin-2 (968 aa).

The span at 1–11 (MVNSSRVQPQQ) shows a compositional bias: polar residues. Disordered regions lie at residues 1–28 (MVNS…DPGR) and 58–181 (RIRQ…LPLE). The Cytoplasmic portion of the chain corresponds to 1-219 (MVNSSRVQPQ…STNREKYLKS (219 aa)). Over residues 62 to 83 (AAARDPPAGAAASPSPPLSSCS) the composition is skewed to low complexity. Phosphoserine occurs at positions 76 and 80. The span at 95–107 (EAEEEEEEVEGEE) shows a compositional bias: acidic residues. Low complexity predominate over residues 123–139 (RRSAASSAVSSVGARSR). The residue at position 137 (Arg-137) is an Omega-N-methylarginine. The helical transmembrane segment at 220–241 (VLRELVTYLLFLIVLCILTYGM) threads the bilayer. Topologically, residues 242–468 (MSSNVYYYTR…PLKLIRYVTT (227 aa)) are extracellular. Residues Asn-299 and Asn-305 are each glycosylated (N-linked (GlcNAc...) asparagine). Asn-328 carries N-linked (GlcNAc...) (complex) asparagine glycosylation. A disulfide bridge connects residues Cys-331 and Cys-344. Asn-362 and Asn-375 each carry an N-linked (GlcNAc...) asparagine glycan. A helical transmembrane segment spans residues 469–489 (FDFFLAACEIIFCFFIFYYVV). The Cytoplasmic segment spans residues 490–505 (EEILEIRIHKLHYFRS). The chain crosses the membrane as a helical span at residues 506-526 (FWNCLDVVIVVLSVVAIGINI). Over 527-552 (YRTSNVEVLLQFLEDQNTFPNFEHLA) the chain is Extracellular. A helical membrane pass occupies residues 553–573 (YWQIQFNNIAAVTVFFVWIKL). Residue Gln-557 participates in cholesterol binding. Residues 574–597 (FKFINFNRTMSQLSTTMSRCAKDL) lie on the Cytoplasmic side of the membrane. Residues 598 to 619 (FGFAIMFFIIFLAYAQLAYLVF) form a helical membrane-spanning segment. At 620 to 631 (GTQVDDFSTFQE) the chain is on the extracellular side. An intramembrane region (pore-forming) is located at residues 632 to 646 (CIFTQFRIILGDINF). Position 641 (Leu-641) interacts with Ca(2+). The short motif at 641–643 (LGD) is the Selectivity filter element. At 647 to 654 (AEIEEANR) the chain is on the extracellular side. A helical transmembrane segment spans residues 655–675 (VLGPIYFTTFVFFMFFILLNM). The Cytoplasmic portion of the chain corresponds to 676 to 968 (FLAIINDTYS…GGNGSSNVHV (293 aa)). In terms of domain architecture, EF-hand spans 750–785 (HTDAEIEAIFTKYDQDGDQELTEHEHQQMRDDLEKE). Ca(2+) contacts are provided by Asp-763, Asp-765, Asp-767, Glu-769, and Glu-774. Residues 764 to 831 (QDGDQELTEH…HSSRRRGSIS (68 aa)) are disordered. Positions 770 to 795 (LTEHEHQQMRDDLEKEREDLDLDHSS) are enriched in basic and acidic residues. A compositionally biased stretch (low complexity) spans 796–807 (LPRPMSSRSFPR). Ser-801, Ser-808, Ser-812, and Ser-829 each carry phosphoserine. A linker region spans residues 803-822 (RSFPRSLDDSEEDDDEDSGH). The important for interaction with PACS1 and PACS2 stretch occupies residues 810 to 821 (DDSEEDDDEDSG). Positions 833 to 872 (GVSYEEFQVLVRRVDRMEHSIGSIVSKIDAVIVKLEIMER) form a coiled coil. A disordered region spans residues 917–968 (ESDDAASQISHGLGTPVGLNGQPRPRSSRPSSSQSTEGMEGAGGNGSSNVHV). Positions 938–951 (QPRPRSSRPSSSQS) are enriched in low complexity.

This sequence belongs to the polycystin family. Homotetramer. Component of the heterotetrameric polycystin channel complex with PKD1; the tetramer contains one PKD1 chain and three PKD2 chains. Isoform 1 interacts with PKD1 while isoform 3 does not. Interacts with PKD1L1; probably forms a Ca(2+) channel. Interacts with CD2AP. Interacts with HAX1. Interacts with NEK8. Part of a complex containing AKAP5, ADCY5, ADCY6 and PDE4C. Interacts (via C-terminus) with TRPV4 (via C-terminus). Interacts (via C-terminal acidic region) with PACS1 and PACS2; these interactions retain the protein in the endoplasmic reticulum and prevent trafficking to the cell membrane. Interacts with TMEM33. Form a heterotetramer with TRPC1 with a 2:2 stoichiometry; has distinct channel properties separate from PKD2 or TRPC1 homomers alone. Interacts with TMEM120A; TMEM120A inhibits PKD2 channel activity through the physical association of PKD2 with TMEM120A. Interacts (via N-terminus) with RYR2; regulates RYR2 channel activity. Post-translationally, phosphorylated. Phosphorylation is important for protein function; a mutant that lacks the N-terminal phosphorylation sites cannot complement a zebrafish pkd2-deficient mutant. PKD-mediated phosphorylation at the C-terminus regulates its function in the release of Ca(2+) stores from the endoplasmic reticulum. Phosphorylation at Ser-812 regulates PKD2 trafficking. Phosphorylation at Ser-76 is required for PKD2 trafficking to or retention at the lateral plasma membrane. Phosphorylation at Ser-801, Ser-812 and Ser-829 regulates PKD2 channel activity. In terms of processing, N-glycosylated. The four subunits in a tetramer probably differ in the extent of glycosylation; simultaneous glycosylation of all experimentally validated sites would probably create steric hindrance. Thus, glycosylation at Asn-305 is not compatible with glycosylation at Asn-328; only one of these two residues is glycosylated at a given time. Sumoylated by SUMO1; sumoylation regulates PKD2 membrane recycling and is necessary for intravascular pressure-induced arterial contractility. Detected in fetal and adult kidney. Detected at the thick ascending limb of the loop of Henle, at distal tubules, including the distal convoluted tubule and cortical collecting tubules, with weak staining of the collecting duct. Detected on placenta syncytiotrophoblasts (at protein level). Strongly expressed in ovary, fetal and adult kidney, testis, and small intestine. Not detected in peripheral leukocytes.

It localises to the cell projection. The protein resides in the cilium membrane. It is found in the endoplasmic reticulum membrane. Its subcellular location is the cell membrane. The protein localises to the basolateral cell membrane. It localises to the cytoplasmic vesicle membrane. The protein resides in the golgi apparatus. It is found in the vesicle. Its subcellular location is the secreted. The protein localises to the extracellular exosome. The enzyme catalyses K(+)(in) = K(+)(out). The catalysed reaction is Na(+)(in) = Na(+)(out). It carries out the reaction Ca(2+)(in) = Ca(2+)(out). Channel activity is regulated by phosphorylation. Channel activity is regulated by intracellular Ca(2+). At the endoplasmic reticulum membrane (ER), TMEM33 enhances its channel activity. TMEM120A inhibits the channel activity of PKD2, and mediates mechanosensitivity of the PKD2-TMEM120A channel complex. PKD1/PKD2 complex on the plasma membrane is activated by PKD1 N-terminus. Its function is as follows. Forms a nonselective cation channel. Can function as a homotetrameric ion channel or can form heteromer with PKD1. Displays distinct function depending on its subcellular localization and regulation by its binding partners. In primary cilium functions as a cation channel, with a preference for monovalent cations over divalent cations that allows K(+), Na(+) and Ca(2+) influx, with low selectivity for Ca(2+). Involved in fluid-flow mechanosensation by the primary cilium in renal epithelium. In the endoplasmic reticulum, likely functions as a K(+) channel to facilitate Ca(2+) release. The heterotetrameric PKD1/PKD2 channel has higher Ca(2+) permeability than homomeric PKD2 channel and acts as a primarily Ca(2+)-permeable channel. Interacts with and acts as a regulator of a number of other channels, such as TRPV4, TRPC1, IP3R, RYR2, ultimately further affecting intracellular signaling, to modulate intracellular Ca(2+) signaling. Together with TRPV4, forms mechano- and thermosensitive channels in cilium. In cardiomyocytes, PKD2 modulates Ca(2+) release from stimulated RYR2 receptors through direct association. Also involved in left-right axis specification via its role in sensing nodal flow; forms a complex with PKD1L1 in cilia to facilitate flow detection in left-right patterning. Acts as a regulator of cilium length together with PKD1. Mediates systemic blood pressure and contributes to the myogenic response in cerebral arteries though vasoconstriction. The polypeptide is Polycystin-2 (Homo sapiens (Human)).